Here is a 768-residue protein sequence, read N- to C-terminus: Telomere repeats-binding bouquet formation protein 1 (768 aa).

2 ARM repeats span residues 101-145 (ELFQ…REVG) and 341-384 (NGLP…GQNS). Positions 399–448 (ETLREHWKAAKEILCRIKQFEKGGKEEKQQNRSGHYKDNTPSMKVNIQTN) form a coiled coil. Composition is skewed to basic and acidic residues over residues 422–436 (GKEEKQQNRSGHYKD) and 461–475 (RAEDKDINQSRELRS). Disordered stretches follow at residues 422–441 (GKEEKQQNRSGHYKDNTPSM) and 454–475 (ADSTGGTRAEDKDINQSRELRS). The interval 524 to 700 (QNLDKEKTFD…EAMERRSPVP (177 aa)) is interaction with TERF1. Position 648 is a phosphothreonine (Thr-648). Positions 707 to 760 (KKRRIRKDFTKEEVNYLFHGVKTMGNHWNSILWSFPFQKGRRAVDLAHKYHRLI) constitute a Myb-like domain.

The protein belongs to the TERB1 family. In terms of assembly, component of the MAJIN-TERB1-TERB2 complex, composed of MAJIN, TERB1 and TERB2. Interacts with TERF1, STAG3 and SUN1. Interacts (via Myb-like domain) with the cohesin complex; probably mediated via interaction with STAG3. In terms of processing, phosphorylated by CDK. Phosphorylation by CDK takes place in late prophase when the cap exchange is prominent. is important for the stabilization of telomere attachment but dispenable for the cap exchange. In terms of tissue distribution, expressed in testis and fetal oocytes.

Its subcellular location is the chromosome. The protein localises to the telomere. The protein resides in the nucleus inner membrane. Functionally, meiosis-specific telomere-associated protein involved in meiotic telomere attachment to the nucleus inner membrane, a crucial step for homologous pairing and synapsis. Component of the MAJIN-TERB1-TERB2 complex, which promotes telomere cap exchange by mediating attachment of telomeric DNA to the inner nuclear membrane and replacement of the protective cap of telomeric chromosomes: in early meiosis, the MAJIN-TERB1-TERB2 complex associates with telomeric DNA and the shelterin/telosome complex. During prophase, the complex matures and promotes release of the shelterin/telosome complex from telomeric DNA. In the MAJIN-TERB1-TERB2 complex, TERB1 probably mediates association with the shelterin/telosome complex via interaction with TERF1, promoting priming telomeric DNA attachment'. Promotes telomere association with the nuclear envelope and deposition of the SUN-KASH/LINC complex. Also recruits cohesin to telomeres to develop structural rigidity. This chain is Telomere repeats-binding bouquet formation protein 1, found in Mus musculus (Mouse).